A 545-amino-acid chain; its full sequence is MFILNNRKWRKLKRDPSAFFRDSKFNFLRYFSAKKFAKNFKNSSHIHKTNISKAQSNISSTLKQNRKQDMLIPINFFNFEYIVKKLNNQNAIGVYILPSNLTLKPALCILESHKEDFLNKFLLTISSENLKLQYKFNGQIKNPKSVNEIWTDLFSIAHVDMKLSTDRTLSSSISQFWFRLEFCKEDKDFILFPTANRYSRKLWKHSIKNNQLFKEGIRNYSEISSLPYEEDHNFDIDLVFTWVNSEDKNWQELYKKYKPDFNSDATSTSRFLSRDELKFALRSWEMNGSFIRKIFIVSNCAPPAWLDLNNPKIQWVYHEEIMPQSALPTFSSHAIETSLHHIPGISNYFIYSNXDFLLTKPLNKDNFFYSNGIAKLRLEAWGNVNGECTEGEPDYLNGARNANTLLEKEFKKFTTKLHTHSPQSMRTDILFEMEKKYPEEFNRTLHNKFRSLDDIAVTGYLYHHYALLSGRALQSSDKTELVQQNHDFKKKLNNVVTLTKERNFDKLPLSVCINDGADSHLNEEWNVQVIKFLETLFPLPSSFEK.

This sequence belongs to the stealth family.

Its function is as follows. May be the polymerase that links individual UDP-N-acetyl-D-mannosamine monomers. In serotype A the capsule is composed of repeated units of (alpha 1-6)-linked N-acetyl-D-mannosamine-1-phosphate. This Neisseria meningitidis serogroup A protein is Capsular polysaccharide phosphotransferase SacB (sacB).